Consider the following 506-residue polypeptide: AMP phosphorylase (506 aa).

Residues Gly167, 193–198 (SRAITG), and Thr202 each bind AMP. The Proton donor role is filled by Asp255. AMP-binding residues include Ser263 and Lys287.

The protein belongs to the thymidine/pyrimidine-nucleoside phosphorylase family. Type 2 subfamily.

It catalyses the reaction AMP + phosphate = alpha-D-ribose 1,5-bisphosphate + adenine. It carries out the reaction CMP + phosphate = cytosine + alpha-D-ribose 1,5-bisphosphate. The catalysed reaction is UMP + phosphate = alpha-D-ribose 1,5-bisphosphate + uracil. Its function is as follows. Catalyzes the conversion of AMP and phosphate to adenine and ribose 1,5-bisphosphate (R15P). Exhibits phosphorylase activity toward CMP and UMP in addition to AMP. Functions in an archaeal AMP degradation pathway, together with R15P isomerase and RubisCO. The chain is AMP phosphorylase from Methanosarcina barkeri (strain Fusaro / DSM 804).